The following is a 155-amino-acid chain: RNA pyrophosphohydrolase (155 aa).

Residues 6-148 (GYRANVAIVL…KQDVYRRALT (143 aa)) form the Nudix hydrolase domain. A Nudix box motif is present at residues 38–59 (GGVATGETPLQAMYRELYEEVG).

This sequence belongs to the Nudix hydrolase family. RppH subfamily. Requires a divalent metal cation as cofactor.

In terms of biological role, accelerates the degradation of transcripts by removing pyrophosphate from the 5'-end of triphosphorylated RNA, leading to a more labile monophosphorylated state that can stimulate subsequent ribonuclease cleavage. This chain is RNA pyrophosphohydrolase, found in Francisella philomiragia subsp. philomiragia (strain ATCC 25017 / CCUG 19701 / FSC 153 / O#319-036).